Here is a 325-residue protein sequence, read N- to C-terminus: MLLAPGDVIKRSSEELKQRQIQINLVDWAESEGGKEDKTEPKEESKAEGSKDGEGTQSESGQKEEGGKETKDADVDRRIHTAVGSGSSTKGLGERANENADRGDGKVGGGGGDADAGVGATGTNGRRWVVLTEEIARAIESKYGTKIDVYRDEVPAQIIEVERSLQKELGISREGVAEQTERLRDLRRKEKNGTHAKAVERGGRKQRKKTHGDAQREGVEEEKTSEEPARIGITIEGVMSQKKLLSMIGGVERKMAPIGARESAVMLVSNSIKDVMRATAYFTAPTGDPHWKEVAREASKKKNILAYTSTGGDAKTEFLHLIDHL.

2 disordered regions span residues 1-122 (MLLA…GATG) and 185-230 (DLRR…EPAR). 4 stretches are compositionally biased toward basic and acidic residues: residues 8–18 (VIKRSSEELKQ), 32–54 (EGGKEDKTEPKEESKAEGSKDGE), 61–79 (GQKEEGGKETKDADVDRRI), and 92–105 (LGERANENADRGDG). Lysine 106 is an ATP binding site. The span at 106–122 (KVGGGGGDADAGVGATG) shows a compositional bias: gly residues. Composition is skewed to basic and acidic residues over residues 185 to 203 (DLRRKEKNGTHAKAVERGG) and 211 to 229 (HGDAQREGVEEEKTSEEPA).

This sequence belongs to the orbivirus VP6 family. In terms of assembly, homohexamer.

It localises to the virion. The catalysed reaction is ATP + H2O = ADP + phosphate + H(+). In terms of biological role, ATP dependent RNA helicase essential for RNA packaging and viral transcription. Possesses ss- and dsRNA-binding capacity. This chain is Helicase VP6-A (Segment-9), found in Bluetongue virus 17 (isolate USA) (BTV 17).